The sequence spans 161 residues: Nuclear transcription factor Y subunit B-3 (161 aa).

Residues 1–23 are disordered; that stretch reads MADSDNDSGGHKDGGNASTREQD. Ala2 bears the N-acetylalanine mark. Over residues 8-23 the composition is skewed to basic and acidic residues; sequence SGGHKDGGNASTREQD. The DNA-binding element occupies 26 to 32; the sequence is LPIANVS. A subunit association domain (SAD) region spans residues 53–64; sequence VQECVSEFISFI. Residues 114–146 are disordered; sequence EKTTTAGRQGDKEGGGGGGGAGSGSGGAPMYGG. Residues 128 to 146 are compositionally biased toward gly residues; that stretch reads GGGGGGAGSGSGGAPMYGG.

The protein belongs to the NFYB/HAP3 subunit family. In terms of assembly, heterotrimeric transcription factor composed of three components, NF-YA, NF-YB and NF-YC. NF-YB and NF-YC must interact and dimerize for NF-YA association and DNA binding. Component of a heat stress-inducible transcriptional complex with NF-YA and NF-YB subunits made, at least, of NFYA2, NFYB3 and DPB3-1 in cooperation with DREB2A. Binds directly with DPB3-1. As to expression, ubiquitous. Expressed in seedlings, petioles, hypocotyls, reproductive organ tissues and leaves.

The protein resides in the nucleus. It is found in the cytoplasm. It localises to the cytosol. Component of the NF-Y/HAP transcription factor complex. The NF-Y complex stimulates the transcription of various genes by recognizing and binding to a CCAAT motif in promoters. Promotes the expression of heat stress-inducible genes by contributing to the formation of a heat stress-specific transcriptional complex with NF-Y subunits (e.g. DPB3-1, NF-YA2 and NF-YB3) and DREB2A at the promoter of target genes, thus promoting heat tolerance. In Arabidopsis thaliana (Mouse-ear cress), this protein is Nuclear transcription factor Y subunit B-3.